Consider the following 126-residue polypeptide: Holo-[acyl-carrier-protein] synthase (126 aa).

Mg(2+) is bound by residues Asp8 and Glu59.

The protein belongs to the P-Pant transferase superfamily. AcpS family. The cofactor is Mg(2+).

It is found in the cytoplasm. It catalyses the reaction apo-[ACP] + CoA = holo-[ACP] + adenosine 3',5'-bisphosphate + H(+). Functionally, transfers the 4'-phosphopantetheine moiety from coenzyme A to a Ser of acyl-carrier-protein. The polypeptide is Holo-[acyl-carrier-protein] synthase (Rickettsia prowazekii (strain Madrid E)).